The primary structure comprises 246 residues: NAD-dependent protein deacylase (246 aa).

The Deacetylase sirtuin-type domain occupies 1–246 (MDLSQARAAL…RGLELLLEDD (246 aa)). 21–41 (GAGISAESGIPTFRDAQTGHW) provides a ligand contact to NAD(+). Substrate-binding residues include tyrosine 66 and arginine 69. 101–104 (QNVD) provides a ligand contact to NAD(+). The active-site Proton acceptor is the histidine 123. NAD(+) is bound by residues 191–193 (GTS), 217–219 (NPE), and alanine 235.

Belongs to the sirtuin family. Class III subfamily.

It localises to the cytoplasm. The enzyme catalyses N(6)-acetyl-L-lysyl-[protein] + NAD(+) + H2O = 2''-O-acetyl-ADP-D-ribose + nicotinamide + L-lysyl-[protein]. It catalyses the reaction N(6)-succinyl-L-lysyl-[protein] + NAD(+) + H2O = 2''-O-succinyl-ADP-D-ribose + nicotinamide + L-lysyl-[protein]. Functionally, NAD-dependent lysine deacetylase and desuccinylase that specifically removes acetyl and succinyl groups on target proteins. Modulates the activities of several proteins which are inactive in their acylated form. This chain is NAD-dependent protein deacylase, found in Deinococcus radiodurans (strain ATCC 13939 / DSM 20539 / JCM 16871 / CCUG 27074 / LMG 4051 / NBRC 15346 / NCIMB 9279 / VKM B-1422 / R1).